Reading from the N-terminus, the 164-residue chain is Protein-export protein SecB (164 aa).

Belongs to the SecB family. Homotetramer, a dimer of dimers. One homotetramer interacts with 1 SecA dimer.

The protein resides in the cytoplasm. One of the proteins required for the normal export of preproteins out of the cell cytoplasm. It is a molecular chaperone that binds to a subset of precursor proteins, maintaining them in a translocation-competent state. It also specifically binds to its receptor SecA. This chain is Protein-export protein SecB, found in Ruegeria sp. (strain TM1040) (Silicibacter sp.).